The following is a 407-amino-acid chain: Serine/threonine transporter SstT (407 aa).

9 consecutive transmembrane segments (helical) span residues 10 to 30 (AKGN…LIGI), 42 to 62 (LGIL…FILI), 81 to 101 (IIIL…LANF), 141 to 161 (ALSS…GAAL), 179 to 199 (VLKI…GLVA), 218 to 238 (ILLV…IVFF), 245 to 267 (FPLI…SSAA), 288 to 308 (ISIP…IAIL), and 316 to 336 (VGIE…TFAA).

This sequence belongs to the dicarboxylate/amino acid:cation symporter (DAACS) (TC 2.A.23) family.

The protein localises to the cell inner membrane. It carries out the reaction L-serine(in) + Na(+)(in) = L-serine(out) + Na(+)(out). It catalyses the reaction L-threonine(in) + Na(+)(in) = L-threonine(out) + Na(+)(out). Involved in the import of serine and threonine into the cell, with the concomitant import of sodium (symport system). This chain is Serine/threonine transporter SstT, found in Campylobacter jejuni subsp. doylei (strain ATCC BAA-1458 / RM4099 / 269.97).